The sequence spans 69 residues: Light-harvesting polypeptide B-800/860 alpha chain (69 aa).

The Cytoplasmic portion of the chain corresponds to 1–14; the sequence is MTNGKIWLVVKPTV. The chain crosses the membrane as a helical span at residues 15–35; the sequence is GLPIGMLFAALLAVLIHGLLF. His31 serves as a coordination point for a bacteriochlorophyll. At 36-69 the chain is on the periplasmic side; that stretch reads VDGRLKSWWSEFPVAKPAVVSVQAAPAPVAAEVK.

Belongs to the antenna complex alpha subunit family. In terms of assembly, the core complex is formed by different alpha and beta chains, binding bacteriochlorophyll molecules, and arranged most probably in tetrameric structures disposed around the reaction center. The non-pigmented gamma chains may constitute additional components.

It localises to the cell inner membrane. In terms of biological role, antenna complexes are light-harvesting systems, which transfer the excitation energy to the reaction centers. In Rhodocyclus tenuis (Rhodospirillum tenue), this protein is Light-harvesting polypeptide B-800/860 alpha chain.